The sequence spans 146 residues: uncharacterized protein (146 aa).

This is an uncharacterized protein from Arabidopsis thaliana (Mouse-ear cress).